A 554-amino-acid polypeptide reads, in one-letter code: Wee1-like protein kinase 2-C (554 aa).

Disordered stretches follow at residues 1–86 and 145–183; these read MRTA…GGEC and TLVNVNPFTPQSYRQTHFQPNGKRKERPEDDCSSDSQMK. Composition is skewed to polar residues over residues 38–48 and 147–163; these read SPVSSWRTNNC and VNVNPFTPQSYRQTHFQ. The Protein kinase domain maps to 213–487; the sequence is FLEIEKIGAG…AKNSVLRRCV (275 aa). ATP contacts are provided by residues 219 to 227 and Lys-242; that span reads IGAGEFGSV. Residue Asp-340 is the Proton acceptor of the active site. Asn-345 and Asp-377 together coordinate Mg(2+). Residues 490–516 adopt a coiled-coil conformation; that stretch reads AAELQKQLNVEKFKTAMLERELQAAKL.

The protein belongs to the protein kinase superfamily. Ser/Thr protein kinase family. WEE1 subfamily.

It is found in the nucleus. The enzyme catalyses L-tyrosyl-[protein] + ATP = O-phospho-L-tyrosyl-[protein] + ADP + H(+). Functionally, protein tyrosine kinase that phosphorylates and inhibits cdk1 and acts as a regulator of meiosis in oocytes. Required to ensure the meiotic cell cycle in oocytes by phosphorylating cdk1 at 'Tyr-15', leading to inhibit cdk1 activity and prevent meiosis. The chain is Wee1-like protein kinase 2-C (wee2-c) from Xenopus laevis (African clawed frog).